The following is a 473-amino-acid chain: MKTLYSLRRFYHVETLFNGTLALTGRDQETTGFAWWAGNARLINLSGKLLGAHVAHAGLIVFWAGAMNLFEVAHFVPEKPMYEQGLILLPHLATLGWGVGPGGEVIDTFPYFVSGVLHLISSAVLGFGGIYHALLGPETLEESFPFFGYVWKDRNKMTTILGIHLILLGIGAFLLVFKALYFGGIYDTWAPGGGDVRKITNLTLSPSILFGYLLKSPFGGEGWIVSVDDLEDIIGGHVWLGSICILGGIWHILTKPFAWARRALVWSGEAYLSYSLGALSVFGFIACCFVWFNNTAYPSEFYGPTGPEASQAQAFTFLVRDQRLGANVGSAQGPTGLGKYLMRSPTGEVIFGGETMRFWDLRAPWLEPLRGPNGLDLSRLKKDIQPWQERRSAEYMTHAPLGSLNSVGGVATEINAVNYVSPRSWLATSHFVLGFFLFVGHLWHAGRARAAAAGFEKGIDRDFEPVLSMTPLN.

Residues 1–14 (MKTLYSLRRFYHVE) constitute a propeptide that is removed on maturation. Thr-15 carries the post-translational modification N-acetylthreonine. A Phosphothreonine modification is found at Thr-15. 5 consecutive transmembrane segments (helical) span residues 69–93 (LFEV…PHLA), 134–155 (LLGP…KDRN), 178–200 (KALY…RKIT), 255–275 (KPFA…LSYS), and 291–312 (WFNN…ASQA). [CaMn4O5] cluster is bound at residue Glu-367. The chain crosses the membrane as a helical span at residues 447-471 (RARAAAAGFEKGIDRDFEPVLSMTP).

The protein belongs to the PsbB/PsbC family. PsbC subfamily. As to quaternary structure, PSII is composed of 1 copy each of membrane proteins PsbA, PsbB, PsbC, PsbD, PsbE, PsbF, PsbH, PsbI, PsbJ, PsbK, PsbL, PsbM, PsbT, PsbX, PsbY, PsbZ, Psb30/Ycf12, at least 3 peripheral proteins of the oxygen-evolving complex and a large number of cofactors. It forms dimeric complexes. Binds multiple chlorophylls and provides some of the ligands for the Ca-4Mn-5O cluster of the oxygen-evolving complex. It may also provide a ligand for a Cl- that is required for oxygen evolution. PSII binds additional chlorophylls, carotenoids and specific lipids. serves as cofactor.

The protein localises to the plastid. Its subcellular location is the chloroplast thylakoid membrane. Its function is as follows. One of the components of the core complex of photosystem II (PSII). It binds chlorophyll and helps catalyze the primary light-induced photochemical processes of PSII. PSII is a light-driven water:plastoquinone oxidoreductase, using light energy to abstract electrons from H(2)O, generating O(2) and a proton gradient subsequently used for ATP formation. The chain is Photosystem II CP43 reaction center protein from Phaseolus vulgaris (Kidney bean).